We begin with the raw amino-acid sequence, 318 residues long: Formimidoylglutamase (318 aa).

Residues His130, Asp155, His157, Asp159, Asp246, and Asp248 each coordinate Mn(2+).

Belongs to the arginase family. The cofactor is Mn(2+).

It catalyses the reaction N-formimidoyl-L-glutamate + H2O = formamide + L-glutamate. It participates in amino-acid degradation; L-histidine degradation into L-glutamate; L-glutamate from N-formimidoyl-L-glutamate (hydrolase route): step 1/1. In terms of biological role, catalyzes the conversion of N-formimidoyl-L-glutamate to L-glutamate and formamide. The polypeptide is Formimidoylglutamase (Photorhabdus laumondii subsp. laumondii (strain DSM 15139 / CIP 105565 / TT01) (Photorhabdus luminescens subsp. laumondii)).